The following is a 215-amino-acid chain: MAKPLTERFFIPKELKVFGRWSVEDVTVNDPSLRPYIALEPRILPHSHGRHAKKPFGKAQVHIVERLINKVMRSGASHYKAGGHFMRREHRSIMSKKMKAYEVVKEAFMIIERRTKQNPIQVLIRAIENSAPREDTTTIAFGGIRYHMAVDVSPLRRLDVALKNIALGASIKCYRNKTTYAQALAEEIIAAANRDPKSFAYSKKEEIERIAQSSR.

It belongs to the universal ribosomal protein uS7 family. In terms of assembly, part of the 30S ribosomal subunit.

One of the primary rRNA binding proteins, it binds directly to 16S rRNA where it nucleates assembly of the head domain of the 30S subunit. Is located at the subunit interface close to the decoding center. This is Small ribosomal subunit protein uS7 from Thermococcus gammatolerans (strain DSM 15229 / JCM 11827 / EJ3).